Here is a 99-residue protein sequence, read N- to C-terminus: DNA-directed RNA polymerase subunit omega (99 aa).

The protein belongs to the RNA polymerase subunit omega family. In terms of assembly, the RNAP catalytic core consists of 2 alpha, 1 beta, 1 beta' and 1 omega subunit. When a sigma factor is associated with the core the holoenzyme is formed, which can initiate transcription.

It catalyses the reaction RNA(n) + a ribonucleoside 5'-triphosphate = RNA(n+1) + diphosphate. Its function is as follows. Promotes RNA polymerase assembly. Latches the N- and C-terminal regions of the beta' subunit thereby facilitating its interaction with the beta and alpha subunits. The polypeptide is DNA-directed RNA polymerase subunit omega (Xanthomonas oryzae pv. oryzae (strain MAFF 311018)).